We begin with the raw amino-acid sequence, 361 residues long: Chorismate synthase (361 aa).

NADP(+) is bound at residue Arg47. FMN is bound by residues 124–126 (RAS), Gly286, 301–305 (KPTAT), and Arg327.

The protein belongs to the chorismate synthase family. In terms of assembly, homotetramer. FMNH2 serves as cofactor.

It carries out the reaction 5-O-(1-carboxyvinyl)-3-phosphoshikimate = chorismate + phosphate. Its pathway is metabolic intermediate biosynthesis; chorismate biosynthesis; chorismate from D-erythrose 4-phosphate and phosphoenolpyruvate: step 7/7. Catalyzes the anti-1,4-elimination of the C-3 phosphate and the C-6 proR hydrogen from 5-enolpyruvylshikimate-3-phosphate (EPSP) to yield chorismate, which is the branch point compound that serves as the starting substrate for the three terminal pathways of aromatic amino acid biosynthesis. This reaction introduces a second double bond into the aromatic ring system. In Akkermansia muciniphila (strain ATCC BAA-835 / DSM 22959 / JCM 33894 / BCRC 81048 / CCUG 64013 / CIP 107961 / Muc), this protein is Chorismate synthase.